A 210-amino-acid polypeptide reads, in one-letter code: Scoloptoxin SSD552 (210 aa).

Positions Met-1–Gly-23 are cleaved as a signal peptide.

Contains 3 disulfide bonds. In terms of tissue distribution, expressed by the venom gland.

It localises to the secreted. This Scolopendra dehaani (Thai centipede) protein is Scoloptoxin SSD552.